Here is a 99-residue protein sequence, read N- to C-terminus: Integration host factor subunit alpha (99 aa).

This sequence belongs to the bacterial histone-like protein family. As to quaternary structure, heterodimer of an alpha and a beta chain.

This protein is one of the two subunits of integration host factor, a specific DNA-binding protein that functions in genetic recombination as well as in transcriptional and translational control. This Stenotrophomonas maltophilia (strain R551-3) protein is Integration host factor subunit alpha.